A 350-amino-acid chain; its full sequence is Beta-hexosaminidase (350 aa).

Substrate-binding positions include aspartate 62, arginine 70, arginine 133, and 163-164; that span reads KH. The Proton donor/acceptor role is filled by histidine 176. Catalysis depends on aspartate 248, which acts as the Nucleophile.

It belongs to the glycosyl hydrolase 3 family. NagZ subfamily.

It localises to the cytoplasm. The enzyme catalyses Hydrolysis of terminal non-reducing N-acetyl-D-hexosamine residues in N-acetyl-beta-D-hexosaminides.. The protein operates within cell wall biogenesis; peptidoglycan recycling. Its function is as follows. Plays a role in peptidoglycan recycling by cleaving the terminal beta-1,4-linked N-acetylglucosamine (GlcNAc) from peptide-linked peptidoglycan fragments, giving rise to free GlcNAc, anhydro-N-acetylmuramic acid and anhydro-N-acetylmuramic acid-linked peptides. The chain is Beta-hexosaminidase from Haemophilus influenzae (strain PittEE).